The chain runs to 309 residues: Homoserine O-succinyltransferase (309 aa).

The active-site Acyl-thioester intermediate is C142. Residues K163 and S192 each coordinate substrate. H235 serves as the catalytic Proton acceptor. Residue E237 is part of the active site. R249 lines the substrate pocket.

Belongs to the MetA family.

It is found in the cytoplasm. The enzyme catalyses L-homoserine + succinyl-CoA = O-succinyl-L-homoserine + CoA. It participates in amino-acid biosynthesis; L-methionine biosynthesis via de novo pathway; O-succinyl-L-homoserine from L-homoserine: step 1/1. Functionally, transfers a succinyl group from succinyl-CoA to L-homoserine, forming succinyl-L-homoserine. The chain is Homoserine O-succinyltransferase from Pectobacterium carotovorum subsp. carotovorum (strain PC1).